The sequence spans 146 residues: MEKKVTIYTDGACSGNPGPGGWGAMLMYGKTVREISGGAPATTNNRMELSAAIEALQALKEPCTVDLYSDSSYLVNAINEGWLKRWTANRWKTAAKKTVENIDLWQKILELTDRHRVRFHKVKGHSDNPYNNRCDELARLAVRKKP.

Residues 1-143 (MEKKVTIYTD…CDELARLAVR (143 aa)) enclose the RNase H type-1 domain. Aspartate 10, glutamate 48, aspartate 70, and aspartate 135 together coordinate Mg(2+).

It belongs to the RNase H family. In terms of assembly, monomer. Mg(2+) is required as a cofactor.

Its subcellular location is the cytoplasm. It carries out the reaction Endonucleolytic cleavage to 5'-phosphomonoester.. Its function is as follows. Endonuclease that specifically degrades the RNA of RNA-DNA hybrids. This chain is Ribonuclease H, found in Chlorobium phaeovibrioides (strain DSM 265 / 1930) (Prosthecochloris vibrioformis (strain DSM 265)).